A 107-amino-acid polypeptide reads, in one-letter code: UPF0235 protein RPC_0058 (107 aa).

The protein belongs to the UPF0235 family.

The sequence is that of UPF0235 protein RPC_0058 from Rhodopseudomonas palustris (strain BisB18).